Reading from the N-terminus, the 90-residue chain is Phosphoribosyl-ATP pyrophosphatase (90 aa).

It belongs to the PRA-PH family.

The protein resides in the cytoplasm. It catalyses the reaction 1-(5-phospho-beta-D-ribosyl)-ATP + H2O = 1-(5-phospho-beta-D-ribosyl)-5'-AMP + diphosphate + H(+). It participates in amino-acid biosynthesis; L-histidine biosynthesis; L-histidine from 5-phospho-alpha-D-ribose 1-diphosphate: step 2/9. This chain is Phosphoribosyl-ATP pyrophosphatase (hisE), found in Streptomyces coelicolor (strain ATCC BAA-471 / A3(2) / M145).